A 77-amino-acid polypeptide reads, in one-letter code: Acyl carrier protein (77 aa).

The region spanning 1–76 (MSVEQRVKEI…DVLDYIKSKQ (76 aa)) is the Carrier domain. O-(pantetheine 4'-phosphoryl)serine is present on serine 36.

The protein belongs to the acyl carrier protein (ACP) family. In terms of processing, 4'-phosphopantetheine is transferred from CoA to a specific serine of apo-ACP by AcpS. This modification is essential for activity because fatty acids are bound in thioester linkage to the sulfhydryl of the prosthetic group.

The protein resides in the cytoplasm. It functions in the pathway lipid metabolism; fatty acid biosynthesis. In terms of biological role, carrier of the growing fatty acid chain in fatty acid biosynthesis. The chain is Acyl carrier protein from Sulfurihydrogenibium sp. (strain YO3AOP1).